Consider the following 542-residue polypeptide: Valine N-monooxygenase 1 (542 aa).

Topologically, residues 1–21 (MAMNVSTTIGLLNATSFASSS) are cytoplasmic. A helical; Signal-anchor for type II membrane protein transmembrane segment spans residues 22-42 (SINTVKILFVTLFISIVSTIV). The Lumenal segment spans residues 43–542 (KLQKSAANKE…LAPHLYPTSP (500 aa)). A glycan (N-linked (GlcNAc...) asparagine) is linked at Asn278. Residue Cys478 coordinates heme. Residue Asn506 is glycosylated (N-linked (GlcNAc...) asparagine).

The protein belongs to the cytochrome P450 family. It depends on heme as a cofactor. As to expression, expressed in the epidermis, the next two cortex cell layers, the endodermis and the pericycle of leaf petioles. Strong expression around the laticifers among the phloem cells and in parenchymatic cells between the protoxylem and the metaxylem cells. In the leaves, preferentially expressed in the mesophyll cells adjacent to the epidermis.

The protein resides in the microsome membrane. The enzyme catalyses L-valine + 2 reduced [NADPH--hemoprotein reductase] + 2 O2 = (E)-2-methylpropanal oxime + 2 oxidized [NADPH--hemoprotein reductase] + CO2 + 3 H2O + 2 H(+). The catalysed reaction is L-valine + reduced [NADPH--hemoprotein reductase] + O2 = N-hydroxy-L-valine + oxidized [NADPH--hemoprotein reductase] + H2O + 2 H(+). It catalyses the reaction N-hydroxy-L-valine + reduced [NADPH--hemoprotein reductase] + O2 = N,N-dihydroxy-L-valine + oxidized [NADPH--hemoprotein reductase] + H2O + H(+). It carries out the reaction L-isoleucine + 2 reduced [NADPH--hemoprotein reductase] + 2 O2 = (1E,2S)-2-methylbutanal oxime + 2 oxidized [NADPH--hemoprotein reductase] + CO2 + 3 H2O + 2 H(+). The enzyme catalyses L-isoleucine + reduced [NADPH--hemoprotein reductase] + O2 = N-hydroxy-L-isoleucine + oxidized [NADPH--hemoprotein reductase] + H2O + 2 H(+). The catalysed reaction is N-hydroxy-L-isoleucine + reduced [NADPH--hemoprotein reductase] + O2 = N,N-dihydroxy-L-isoleucine + oxidized [NADPH--hemoprotein reductase] + H2O + H(+). It functions in the pathway secondary metabolite biosynthesis. Inhibited by tetcyclasis but not by 1-aminobenzotriazole (ABT). Involved in the biosynthesis of the cyanogenic glucosides linamarin and lotaustralin. Can use L-valine or L-isoleucine as substrate, but not L-leucine, L-phenylalanine, L-tyrosine, D-valine or D-isoleucine. Catalyzes multi-step reactions starting with two successive N-hydroxylations using L-valine and L-isoleucine as substrates leading to the formation of N,N-dihydroxy-L-valine and N,N-dihydroxy-L-isoleucine, respectively; following spontaneous reactions lead to the production of (E)-2-methylpropanal oxime and (1E,2S)-2-methylbutanal oxime, respectively. The protein is Valine N-monooxygenase 1 of Manihot esculenta (Cassava).